We begin with the raw amino-acid sequence, 371 residues long: Cytochrome b (371 aa).

Transmembrane regions (helical) follow at residues 25-45 (FGSM…FLAV), 69-90 (WMMQ…YIHI), 105-125 (WMSG…GYVL), and 170-190 (FFAL…LHII). Heme b contacts are provided by His75 and His89. Heme b contacts are provided by His174 and His188. His193 provides a ligand contact to a ubiquinone. Transmembrane regions (helical) follow at residues 218 to 238 (HKDL…VSFF), 280 to 300 (LGGA…PFTH), 312 to 332 (FSQL…WAAT), and 339 to 358 (FIVI…LLIP).

Belongs to the cytochrome b family. As to quaternary structure, the cytochrome bc1 complex contains 3 respiratory subunits (MT-CYB, CYC1 and UQCRFS1), 2 core proteins (UQCRC1 and UQCRC2) and probably 6 low-molecular weight proteins. It depends on heme b as a cofactor.

It is found in the mitochondrion inner membrane. In terms of biological role, component of the ubiquinol-cytochrome c reductase complex (complex III or cytochrome b-c1 complex) that is part of the mitochondrial respiratory chain. The b-c1 complex mediates electron transfer from ubiquinol to cytochrome c. Contributes to the generation of a proton gradient across the mitochondrial membrane that is then used for ATP synthesis. In Leiopython albertisii (Northern white-lipped python), this protein is Cytochrome b (MT-CYB).